Consider the following 784-residue polypeptide: LPS-assembly protein LptD (784 aa).

The first 24 residues, 1-24 (MKKRIPTLLATMIATALYSQQGLA), serve as a signal peptide directing secretion. 2 cysteine pairs are disulfide-bonded: Cys31-Cys724 and Cys173-Cys725.

The protein belongs to the LptD family. Component of the lipopolysaccharide transport and assembly complex. Interacts with LptE and LptA. Post-translationally, contains two intramolecular disulfide bonds.

The protein resides in the cell outer membrane. In terms of biological role, together with LptE, is involved in the assembly of lipopolysaccharide (LPS) at the surface of the outer membrane. In Escherichia coli O1:K1 / APEC, this protein is LPS-assembly protein LptD.